We begin with the raw amino-acid sequence, 177 residues long: Meiotically up-regulated gene 121 protein (177 aa).

Positions 1 to 23 (MKGFVVISRFILTLFILITPGLA) are cleaved as a signal peptide. The N-linked (GlcNAc...) asparagine glycan is linked to asparagine 121.

It localises to the endoplasmic reticulum. Its subcellular location is the golgi apparatus. Functionally, has a role in meiosis. This is Meiotically up-regulated gene 121 protein (mug121) from Schizosaccharomyces pombe (strain 972 / ATCC 24843) (Fission yeast).